The sequence spans 422 residues: MSIVAVGINHKTAPVAVREKISFNPDKLSIALQEMLNAVQCREVAILSTCNRTELYLVQDGDFDVTQQRLIKWLESFHNVPASTILPSLYWHKDQQAVNHMMRVACGLDSLVLGEPQILGQMKQAYSQAKAAGSMSLIMDRLFQRTFGVAKQVRTETEIGASAVSVAFASVNLAKHIFGGLEKTKVLLVGAGETIELVAKHLYENNVGKITVANRTLARAENMATKIGADVITLAQIPEHMCNADIVISSTGSTLPIIGKGMVEQALASRKHQPIFMVDLAVPRDIEEQVSELEDVFLYTVDDLQGIIAKNIANRRKAAVQAESIVNSQSDNFMAWLRGLNTQDTVISYRKQCLDNRDVLLEKAFIQLKNGKNSEAVLAELANKLTNKFMHAPTSALQSAAQGGELDKLIYLRDIFNIDSQE.

Substrate-binding positions include 49–52, serine 110, 115–117, and glutamine 121; these read TCNR and EPQ. The active-site Nucleophile is the cysteine 50. 190–195 is an NADP(+) binding site; it reads GAGETI.

It belongs to the glutamyl-tRNA reductase family. As to quaternary structure, homodimer.

The catalysed reaction is (S)-4-amino-5-oxopentanoate + tRNA(Glu) + NADP(+) = L-glutamyl-tRNA(Glu) + NADPH + H(+). It functions in the pathway porphyrin-containing compound metabolism; protoporphyrin-IX biosynthesis; 5-aminolevulinate from L-glutamyl-tRNA(Glu): step 1/2. Its function is as follows. Catalyzes the NADPH-dependent reduction of glutamyl-tRNA(Glu) to glutamate 1-semialdehyde (GSA). In Colwellia psychrerythraea (strain 34H / ATCC BAA-681) (Vibrio psychroerythus), this protein is Glutamyl-tRNA reductase.